Here is a 653-residue protein sequence, read N- to C-terminus: Chaperone protein DnaK (653 aa).

The residue at position 198 (Thr198) is a Phosphothreonine; by autocatalysis. Over residues 608–617 (DPEAAAHAAG) the composition is skewed to low complexity. Residues 608–653 (DPEAAAHAAGMHGGAATGGGDGANKHGKGAEDVVEAEFEEVNDDKK) are disordered. The span at 618-629 (MHGGAATGGGDG) shows a compositional bias: gly residues. Over residues 639–653 (DVVEAEFEEVNDDKK) the composition is skewed to acidic residues.

It belongs to the heat shock protein 70 family.

Acts as a chaperone. The protein is Chaperone protein DnaK of Magnetococcus marinus (strain ATCC BAA-1437 / JCM 17883 / MC-1).